Here is a 232-residue protein sequence, read N- to C-terminus: Large ribosomal subunit protein uL1 (232 aa).

The protein belongs to the universal ribosomal protein uL1 family. As to quaternary structure, part of the 50S ribosomal subunit.

Functionally, binds directly to 23S rRNA. The L1 stalk is quite mobile in the ribosome, and is involved in E site tRNA release. In terms of biological role, protein L1 is also a translational repressor protein, it controls the translation of the L11 operon by binding to its mRNA. This is Large ribosomal subunit protein uL1 from Xanthomonas oryzae pv. oryzae (strain KACC10331 / KXO85).